The chain runs to 226 residues: Ribose-5-phosphate isomerase A (226 aa).

Substrate contacts are provided by residues 28–31 (TGST), 83–86 (DGAD), and 97–100 (KGGG). The active-site Proton acceptor is glutamate 106. Lysine 124 is a binding site for substrate.

The protein belongs to the ribose 5-phosphate isomerase family. In terms of assembly, homotetramer.

It catalyses the reaction aldehydo-D-ribose 5-phosphate = D-ribulose 5-phosphate. Its pathway is carbohydrate biosynthesis; D-ribose 5-phosphate biosynthesis. Its function is as follows. Catalyzes the reversible conversion of ribose-5-phosphate to ribulose 5-phosphate. The polypeptide is Ribose-5-phosphate isomerase A (Methanocaldococcus jannaschii (strain ATCC 43067 / DSM 2661 / JAL-1 / JCM 10045 / NBRC 100440) (Methanococcus jannaschii)).